Consider the following 402-residue polypeptide: Protein rds1 (402 aa).

In terms of biological role, may have a function in stress-related responses of the cell. The polypeptide is Protein rds1 (rds1) (Schizosaccharomyces pombe (strain 972 / ATCC 24843) (Fission yeast)).